The chain runs to 354 residues: Ferredoxin--NADP reductase (354 aa).

FAD is bound by residues Asp-42, Gln-50, Tyr-55, Ile-95, Phe-130, Asp-299, and Thr-339.

The protein belongs to the ferredoxin--NADP reductase type 2 family. As to quaternary structure, homodimer. It depends on FAD as a cofactor.

It carries out the reaction 2 reduced [2Fe-2S]-[ferredoxin] + NADP(+) + H(+) = 2 oxidized [2Fe-2S]-[ferredoxin] + NADPH. This Acidovorax sp. (strain JS42) protein is Ferredoxin--NADP reductase.